Here is a 511-residue protein sequence, read N- to C-terminus: Endoglucanase B (511 aa).

Positions M1 to A29 are cleaved as a signal peptide. One can recognise a CBM2 domain in the interval A30 to Q130. The cysteines at positions 32 and 127 are disulfide-linked. Residues S137–S173 are disordered. Residues A180–R209 enclose the CBM10 domain. Intrachain disulfides connect C181–C212 and C191–C206. D276 functions as the Nucleophile in the catalytic mechanism. Residue D393 is the Proton donor of the active site.

It belongs to the glycosyl hydrolase 45 (cellulase K) family.

The protein localises to the periplasm. It catalyses the reaction Endohydrolysis of (1-&gt;4)-beta-D-glucosidic linkages in cellulose, lichenin and cereal beta-D-glucans.. Its function is as follows. This enzyme catalyzes the endohydrolysis of 1,4-beta-glucosidic linkages in cellulose, lichenin and cereal beta-D-glucans. EGB is most active against barley beta-glucan, but showed significant activity against amorphous and crystalline cellulose. This Cellvibrio japonicus (strain Ueda107) (Pseudomonas fluorescens subsp. cellulosa) protein is Endoglucanase B (celB).